Consider the following 506-residue polypeptide: Probable Xaa-Pro aminopeptidase PADG_06815 (506 aa).

Mn(2+) is bound by residues Asp285, Asp296, Glu433, and Glu471.

Belongs to the peptidase M24B family. It depends on Mn(2+) as a cofactor.

The enzyme catalyses Release of any N-terminal amino acid, including proline, that is linked to proline, even from a dipeptide or tripeptide.. Functionally, catalyzes the removal of a penultimate prolyl residue from the N-termini of peptides. This is Probable Xaa-Pro aminopeptidase PADG_06815 from Paracoccidioides brasiliensis (strain Pb18).